The chain runs to 441 residues: UBX domain-containing protein 6 (441 aa).

The tract at residues 1-10 is mediates interaction with LMAN1; the sequence is MKKFFQEFKA. An N-acetylalanine modification is found at lysine 2. Disordered stretches follow at residues 13-79 and 87-106; these read KFKS…QDTI and LQAEATVSGSPEAPGTNVVS. Positions 22–36 are enriched in basic and acidic residues; the sequence is KLKESVGEKAHKEKP. A VCP/p97-interacting motif (VIM) region spans residues 51–63; that stretch reads EAQMAAAAALARL. Over residues 52 to 61 the composition is skewed to low complexity; sequence AQMAAAAALA. The residue at position 96 (serine 96) is a Phosphoserine. Positions 175-244 constitute a PUB domain; it reads VDTIAKYLDN…DPEEFYVLSE (70 aa). The 77-residue stretch at 332–408 folds into the UBX domain; that stretch reads RKYNYTLLRV…GLVPSALLTF (77 aa).

In terms of assembly, interacts with VCP through the PUB domain (via C-terminus) and VIM motif (via N-terminus); the interaction is direct. Forms a ternary complex with CAV1 and VCP. Interacts with SYVN1. Interacts with HERPUD1. Interacts with VCPKMT. May interact with DERL1. Interacts with PLAA, VCP and YOD1; may form a complex involved in macroautophagy. Interacts with LMAN1. As to expression, enhanced expression in testis.

The protein resides in the cytoplasm. The protein localises to the cytosol. Its subcellular location is the membrane. It is found in the nucleus. It localises to the cytoskeleton. The protein resides in the microtubule organizing center. The protein localises to the centrosome. Its subcellular location is the early endosome membrane. It is found in the late endosome membrane. It localises to the lysosome membrane. Functionally, may negatively regulate the ATPase activity of VCP, an ATP-driven segregase that associates with different cofactors to control a wide variety of cellular processes. As a cofactor of VCP, it may play a role in the transport of CAV1 to lysosomes for degradation. It may also play a role in endoplasmic reticulum-associated degradation (ERAD) of misfolded proteins. Together with VCP and other cofactors, it may play a role in macroautophagy, regulating for instance the clearance of damaged lysosomes. The protein is UBX domain-containing protein 6 of Homo sapiens (Human).